A 471-amino-acid polypeptide reads, in one-letter code: Ribulose bisphosphate carboxylase large chain (471 aa).

N119 and T169 together coordinate substrate. K171 functions as the Proton acceptor in the catalytic mechanism. K173 serves as a coordination point for substrate. 3 residues coordinate Mg(2+): K197, D199, and E200. Residue K197 is modified to N6-carboxylysine. H290 serves as the catalytic Proton acceptor. Substrate is bound by residues R291, H323, and S375.

The protein belongs to the RuBisCO large chain family. Type I subfamily. Heterohexadecamer of 8 large chains and 8 small chains; disulfide-linked. The disulfide link is formed within the large subunit homodimers. Mg(2+) serves as cofactor. In terms of processing, the disulfide bond which can form in the large chain dimeric partners within the hexadecamer appears to be associated with oxidative stress and protein turnover.

The protein localises to the carboxysome. The catalysed reaction is 2 (2R)-3-phosphoglycerate + 2 H(+) = D-ribulose 1,5-bisphosphate + CO2 + H2O. It catalyses the reaction D-ribulose 1,5-bisphosphate + O2 = 2-phosphoglycolate + (2R)-3-phosphoglycerate + 2 H(+). Its function is as follows. RuBisCO catalyzes two reactions: the carboxylation of D-ribulose 1,5-bisphosphate, the primary event in carbon dioxide fixation, as well as the oxidative fragmentation of the pentose substrate in the photorespiration process. Both reactions occur simultaneously and in competition at the same active site. The protein is Ribulose bisphosphate carboxylase large chain of Microcystis aeruginosa (strain NIES-843 / IAM M-2473).